A 693-amino-acid polypeptide reads, in one-letter code: Polyribonucleotide nucleotidyltransferase (693 aa).

The Mg(2+) site is built by D485 and D491. Residues 552–611 (PRIETMQINTSKIATVIGPGGKQIRQIIERSGAQVDINDNGLINISANTQESIDKAKELI) form the KH domain. The S1 motif domain maps to 621–689 (GKIYNGRVTS…EKGQLKLSHK (69 aa)).

The protein belongs to the polyribonucleotide nucleotidyltransferase family. Mg(2+) is required as a cofactor.

Its subcellular location is the cytoplasm. The enzyme catalyses RNA(n+1) + phosphate = RNA(n) + a ribonucleoside 5'-diphosphate. In terms of biological role, involved in mRNA degradation. Catalyzes the phosphorolysis of single-stranded polyribonucleotides processively in the 3'- to 5'-direction. This chain is Polyribonucleotide nucleotidyltransferase, found in Chlamydia muridarum (strain MoPn / Nigg).